The chain runs to 405 residues: Argininosuccinate synthase (405 aa).

ATP is bound by residues 10–18 (AYSGGLDTS) and Ala37. Residues Tyr88 and Ser93 each coordinate L-citrulline. An ATP-binding site is contributed by Gly118. The L-aspartate site is built by Thr120, Asn124, and Asp125. Asn124 contributes to the L-citrulline binding site. L-citrulline-binding residues include Arg128, Ser179, Ser188, Glu264, and Tyr276.

It belongs to the argininosuccinate synthase family. Type 1 subfamily. In terms of assembly, homotetramer.

The protein localises to the cytoplasm. The enzyme catalyses L-citrulline + L-aspartate + ATP = 2-(N(omega)-L-arginino)succinate + AMP + diphosphate + H(+). It functions in the pathway amino-acid biosynthesis; L-arginine biosynthesis; L-arginine from L-ornithine and carbamoyl phosphate: step 2/3. The polypeptide is Argininosuccinate synthase (Pseudomonas syringae pv. tomato (strain ATCC BAA-871 / DC3000)).